The chain runs to 353 residues: Probable protein phosphatase 2C 48 (353 aa).

The region spanning 54 to 348 (FAAVCSRRGE…DDCSAICLFF (295 aa)) is the PPM-type phosphatase domain. 4 residues coordinate Mn(2+): Asp-90, Gly-91, Asp-293, and Asp-339.

It belongs to the PP2C family. Mg(2+) serves as cofactor. The cofactor is Mn(2+).

It catalyses the reaction O-phospho-L-seryl-[protein] + H2O = L-seryl-[protein] + phosphate. The enzyme catalyses O-phospho-L-threonyl-[protein] + H2O = L-threonyl-[protein] + phosphate. The protein is Probable protein phosphatase 2C 48 of Oryza sativa subsp. japonica (Rice).